The sequence spans 560 residues: DNA ligase B (560 aa).

K124 functions as the N6-AMP-lysine intermediate in the catalytic mechanism.

It belongs to the NAD-dependent DNA ligase family. LigB subfamily.

It catalyses the reaction NAD(+) + (deoxyribonucleotide)n-3'-hydroxyl + 5'-phospho-(deoxyribonucleotide)m = (deoxyribonucleotide)n+m + AMP + beta-nicotinamide D-nucleotide.. Its function is as follows. Catalyzes the formation of phosphodiester linkages between 5'-phosphoryl and 3'-hydroxyl groups in double-stranded DNA using NAD as a coenzyme and as the energy source for the reaction. This chain is DNA ligase B, found in Escherichia coli O7:K1 (strain IAI39 / ExPEC).